A 319-amino-acid chain; its full sequence is tRNA uridine(34) hydroxylase (319 aa).

Positions 124–218 (LDEDTVILDA…YGKNEETKGE (95 aa)) constitute a Rhodanese domain. The active-site Cysteine persulfide intermediate is Cys178.

The protein belongs to the TrhO family.

It carries out the reaction uridine(34) in tRNA + AH2 + O2 = 5-hydroxyuridine(34) in tRNA + A + H2O. Functionally, catalyzes oxygen-dependent 5-hydroxyuridine (ho5U) modification at position 34 in tRNAs. The chain is tRNA uridine(34) hydroxylase from Listeria monocytogenes serotype 4b (strain CLIP80459).